A 251-amino-acid chain; its full sequence is Triosephosphate isomerase (251 aa).

Residue 9-11 (NWK) participates in substrate binding. His-95 acts as the Electrophile in catalysis. Glu-167 acts as the Proton acceptor in catalysis. Substrate-binding positions include Gly-173, Ser-213, and 234 to 235 (GG).

The protein belongs to the triosephosphate isomerase family. Homodimer.

The protein resides in the cytoplasm. It catalyses the reaction D-glyceraldehyde 3-phosphate = dihydroxyacetone phosphate. Its pathway is carbohydrate biosynthesis; gluconeogenesis. It functions in the pathway carbohydrate degradation; glycolysis; D-glyceraldehyde 3-phosphate from glycerone phosphate: step 1/1. In terms of biological role, involved in the gluconeogenesis. Catalyzes stereospecifically the conversion of dihydroxyacetone phosphate (DHAP) to D-glyceraldehyde-3-phosphate (G3P). The polypeptide is Triosephosphate isomerase (Ligilactobacillus salivarius (strain UCC118) (Lactobacillus salivarius)).